The chain runs to 355 residues: Guanine nucleotide-binding protein alpha-2 subunit (355 aa).

Residues 1-20 form a disordered region; sequence MCFGGRGKDDEAEASRSREL. The 323-residue stretch at 33 to 355 folds into the G-alpha domain; the sequence is KEVKLLLLGA…IQRNLKQLIL (323 aa). A G1 motif region spans residues 36 to 49; that stretch reads KLLLLGAGESGKST. Residues Glu-44, Ser-45, Gly-46, Lys-47, Ser-48, Thr-49, Asp-151, Leu-176, Thr-182, Gly-204, Asn-270, Lys-271, Asp-273, and Ala-328 each coordinate GTP. A Mg(2+)-binding site is contributed by Ser-48. The G2 motif stretch occupies residues 174–182; it reads DLLRSRLRT. Thr-182 contributes to the Mg(2+) binding site. The G3 motif stretch occupies residues 197–206; sequence YRMFDVGGQR. The interval 266–273 is G4 motif; sequence ILFLNKID. The G5 motif stretch occupies residues 326 to 331; the sequence is TNATDT.

The protein belongs to the G-alpha family. G(q) subfamily. As to quaternary structure, g proteins are composed of 3 units; alpha, beta and gamma. The alpha chain contains the guanine nucleotide binding site. Requires Mg(2+) as cofactor.

In terms of biological role, guanine nucleotide-binding proteins (G proteins) are involved as modulators or transducers in various transmembrane signaling systems. This chain is Guanine nucleotide-binding protein alpha-2 subunit (gna-2), found in Neurospora crassa (strain ATCC 24698 / 74-OR23-1A / CBS 708.71 / DSM 1257 / FGSC 987).